The chain runs to 161 residues: Dihydrofolate reductase (161 aa).

Residues 1–160 (MTMVGLIWAQ…LRYRLYSYHR (160 aa)) enclose the DHFR domain. 7-9 (IWA) serves as a coordination point for substrate. Residues 8 to 9 (WA) and 16 to 21 (IGRGGD) each bind NADP(+). The substrate site is built by Asp29 and Arg34. An NADP(+)-binding site is contributed by 45–48 (GRRT). Residue Arg62 coordinates substrate. Residues 67–70 (LSRQ), Gly82, and 96–101 (IGGGQV) each bind NADP(+). Substrate is bound by residues Tyr102 and Thr115.

Belongs to the dihydrofolate reductase family.

It carries out the reaction (6S)-5,6,7,8-tetrahydrofolate + NADP(+) = 7,8-dihydrofolate + NADPH + H(+). The protein operates within cofactor biosynthesis; tetrahydrofolate biosynthesis; 5,6,7,8-tetrahydrofolate from 7,8-dihydrofolate: step 1/1. Key enzyme in folate metabolism. Catalyzes an essential reaction for de novo glycine and purine synthesis, and for DNA precursor synthesis. The sequence is that of Dihydrofolate reductase (folA) from Mycobacterium tuberculosis (strain CDC 1551 / Oshkosh).